Here is a 436-residue protein sequence, read N- to C-terminus: MQTIDLRGVQPTRTAFERLVPRPVVDVQAAMTVAADLIADVRKRGAAALREQAERFDGGVPASVRVPVAEIVAAVDALPGGVREALEEAIARVREATAAQVPPAAVTRIGPGAVIEQRWQPVERAGLYVPGGKAVYPSSVVMNAVPAQVAGVASIALASPPQREFGGAVHPTILGAAGLLGIDEVYAMGGAGAIGALAWGVGELGLEPVQVITGPGNIYVAAAKRVVRGQTGIDSEAGTTEILVIADDTADPRYVAADLISQAEHDEAAASLLVTDSPAFVGRVAAELETLAASTRYAERVRAALGGQQSAVVLVDDLDAAAAFSNAYGPEHLELQTADAEAVLARIQNAGAIFVGPHAPVSLGDYLAGSNHVLPTGGQARFSPGLGAYSFLRPQQVIRYDREALRAVAGRIVALSGAEDLSAHGEAVTLRFEERA.

3 residues coordinate substrate: Thr-240, Gln-262, and His-265. Residues Gln-262 and His-265 each contribute to the Zn(2+) site. Catalysis depends on proton acceptor residues Glu-331 and His-332. His-332, Asp-365, Glu-419, and His-424 together coordinate substrate. Asp-365 is a binding site for Zn(2+). Zn(2+) is bound at residue His-424.

Belongs to the histidinol dehydrogenase family. The cofactor is Zn(2+).

The catalysed reaction is L-histidinol + 2 NAD(+) + H2O = L-histidine + 2 NADH + 3 H(+). It participates in amino-acid biosynthesis; L-histidine biosynthesis; L-histidine from 5-phospho-alpha-D-ribose 1-diphosphate: step 9/9. Functionally, catalyzes the sequential NAD-dependent oxidations of L-histidinol to L-histidinaldehyde and then to L-histidine. The sequence is that of Histidinol dehydrogenase from Leifsonia xyli subsp. xyli (strain CTCB07).